A 321-amino-acid polypeptide reads, in one-letter code: Cytochrome c biogenesis protein CcsA (321 aa).

Helical transmembrane passes span 9–29, 44–64, 71–91, 98–118, 143–163, 225–245, 252–272, and 286–306; these read ILTH…LMNL, GMIA…IYSG, LYES…VPYF, FSAI…SGLL, MLLS…LLVI, VISL…VWAN, WNWD…AIYL, and AIVA…VNLL.

It belongs to the CcmF/CycK/Ccl1/NrfE/CcsA family. May interact with Ccs1.

The protein resides in the plastid. Its subcellular location is the chloroplast thylakoid membrane. Functionally, required during biogenesis of c-type cytochromes (cytochrome c6 and cytochrome f) at the step of heme attachment. The sequence is that of Cytochrome c biogenesis protein CcsA from Acorus calamus var. americanus (American sweet flag).